Consider the following 137-residue polypeptide: Large ribosomal subunit protein uL14A (137 aa).

S2 is modified (N-acetylserine). N6,N6-dimethyllysine; by RKM1 occurs at positions 106 and 110.

This sequence belongs to the universal ribosomal protein uL14 family. In terms of assembly, component of the large ribosomal subunit (LSU). Mature yeast ribosomes consist of a small (40S) and a large (60S) subunit. The 40S small subunit contains 1 molecule of ribosomal RNA (18S rRNA) and 33 different proteins (encoded by 57 genes). The large 60S subunit contains 3 rRNA molecules (25S, 5.8S and 5S rRNA) and 46 different proteins (encoded by 81 genes). Methylated by RKM1 at 2 different sites, but it is unclear which are the 2 methylated residues among Lys-40, Lys-106 and/or Lys-110.

It is found in the cytoplasm. Its function is as follows. Component of the ribosome, a large ribonucleoprotein complex responsible for the synthesis of proteins in the cell. The small ribosomal subunit (SSU) binds messenger RNAs (mRNAs) and translates the encoded message by selecting cognate aminoacyl-transfer RNA (tRNA) molecules. The large subunit (LSU) contains the ribosomal catalytic site termed the peptidyl transferase center (PTC), which catalyzes the formation of peptide bonds, thereby polymerizing the amino acids delivered by tRNAs into a polypeptide chain. The nascent polypeptides leave the ribosome through a tunnel in the LSU and interact with protein factors that function in enzymatic processing, targeting, and the membrane insertion of nascent chains at the exit of the ribosomal tunnel. In Saccharomyces cerevisiae (strain ATCC 204508 / S288c) (Baker's yeast), this protein is Large ribosomal subunit protein uL14A.